The chain runs to 176 residues: NADH-quinone oxidoreductase subunit I (176 aa).

4Fe-4S ferredoxin-type domains are found at residues 47–77 (LTRD…MQAA) and 87–116 (AWFR…MTSE). [4Fe-4S] cluster contacts are provided by Cys57, Cys60, Cys63, Cys67, Cys96, Cys99, Cys102, and Cys106.

It belongs to the complex I 23 kDa subunit family. In terms of assembly, NDH-1 is composed of 14 different subunits. Subunits NuoA, H, J, K, L, M, N constitute the membrane sector of the complex. [4Fe-4S] cluster is required as a cofactor.

It localises to the cell inner membrane. It catalyses the reaction a quinone + NADH + 5 H(+)(in) = a quinol + NAD(+) + 4 H(+)(out). NDH-1 shuttles electrons from NADH, via FMN and iron-sulfur (Fe-S) centers, to quinones in the respiratory chain. The immediate electron acceptor for the enzyme in this species is believed to be ubiquinone. Couples the redox reaction to proton translocation (for every two electrons transferred, four hydrogen ions are translocated across the cytoplasmic membrane), and thus conserves the redox energy in a proton gradient. This is NADH-quinone oxidoreductase subunit I from Syntrophotalea carbinolica (strain DSM 2380 / NBRC 103641 / GraBd1) (Pelobacter carbinolicus).